The sequence spans 305 residues: Nucleotide-binding protein Saro_2904 (305 aa).

15–22 is an ATP binding site; it reads GLLGAGKT. A GTP-binding site is contributed by 68-71; the sequence is DTRT.

This sequence belongs to the RapZ-like family.

Functionally, displays ATPase and GTPase activities. This Novosphingobium aromaticivorans (strain ATCC 700278 / DSM 12444 / CCUG 56034 / CIP 105152 / NBRC 16084 / F199) protein is Nucleotide-binding protein Saro_2904.